The primary structure comprises 496 residues: RNA-binding motif protein, Y chromosome, family 1 member F/J (496 aa).

The RRM domain occupies 8 to 85 (GKLFIGGLNR…KAIKVEQAKK (78 aa)). 2 disordered regions span residues 81 to 345 (EQAK…YAPP) and 452 to 496 (KDQR…SSRY). Low complexity-rich tracts occupy residues 97–114 (PASSRNRSPSGSLRSARG) and 149–159 (PVKRGPSSRSG). Polar residues predominate over residues 175 to 184 (NSWMGSQGPM). Basic and acidic residues-rich tracts occupy residues 204–214 (RNDRMSTRHDG), 242–253 (DNGHSNRDEHSS), 276–289 (AYRDYGHSRRDESY), 313–326 (GYRDYGHSRRHESY), 335–345 (SSRETRDYAPP), and 484–496 (GESRSEKGDSSRY).

As to quaternary structure, interacts with splicing factor proteins SFRS3/SRP20, TRA2B/SFRS10, KHDRBS1/SAM68 and KHDRBS3. As to expression, testis-specific.

It localises to the nucleus. Functionally, RNA-binding protein which may be involved in spermatogenesis. Required for sperm development, possibly by participating in pre-mRNA splicing in the testis. The polypeptide is RNA-binding motif protein, Y chromosome, family 1 member F/J (RBMY1F) (Homo sapiens (Human)).